Consider the following 481-residue polypeptide: Cysteine--tRNA ligase (481 aa).

Cys-29 is a Zn(2+) binding site. The short motif at 31–41 (VTVYDYCHIGH) is the 'HIGH' region element. Positions 209, 234, and 238 each coordinate Zn(2+). The short motif at 266 to 270 (KMSKS) is the 'KMSKS' region element. Lys-269 is an ATP binding site.

Belongs to the class-I aminoacyl-tRNA synthetase family. Monomer. It depends on Zn(2+) as a cofactor.

Its subcellular location is the cytoplasm. It catalyses the reaction tRNA(Cys) + L-cysteine + ATP = L-cysteinyl-tRNA(Cys) + AMP + diphosphate. The chain is Cysteine--tRNA ligase from Syntrophotalea carbinolica (strain DSM 2380 / NBRC 103641 / GraBd1) (Pelobacter carbinolicus).